Reading from the N-terminus, the 593-residue chain is MGIGNSQPNSQEAQLCTLPEKAEQPTDDNTCQQNNVVPATVSEPDQASPAIQDAETQVESIVDKRKNKKGKTEYLVRWKGYDSEDDTWEPEQHLVNCEEYIHDFNRRHNERQKEGSLARASRASPSNARKQISRSTHSTLSKTNSKALVVGKDHESKSSQLLAASQKFRKNPAPSLANRKNMDLAKSGIKILVPKSPVKGRTSVDGFQGESPEKLDPVDQGAEDTVAPEVTAEKPTGALLGPGAERARMGSRPRIHPLVPQVSGPVTAAMATGLAVNGKGTSPFMDALAANGTVTIQTSVTGVTAGKRKFIDDRRDQPFDKRLRFSVRQTESAYRYRDIVVRKQDGFTHILLSTKSSENNSLNPEVMKEVQSALSTAAADDSKLVLLSAVGSVFCCGLDFIYFIRRLTDDRKRESTKMADAIRNFVNTFIQFKKPIIVAVNGPAIGLGASILPLCDVVWANEKAWFQTPYTTFGQSPDGCSTVMFPKIMGGASANEMLFSGRKLTAQEACGKGLVSQVFWPGTFTQEVMVRIKELASCNPVVLEESKALVRCNMKMELEQANERECEVLKKIWGSAQGMDSMLKYLQRKIDEF.

Residues 1–14 show a composition bias toward polar residues; sequence MGIGNSQPNSQEAQ. The tract at residues 1-30 is disordered; sequence MGIGNSQPNSQEAQLCTLPEKAEQPTDDNT. Positions 56 to 116 constitute a Chromo domain; sequence TQVESIVDKR…RHNERQKEGS (61 aa). An interaction with EZH2 region spans residues 56 to 304; the sequence is TQVESIVDKR…TIQTSVTGVT (249 aa). A Phosphoserine modification is found at serine 83. The disordered stretch occupies residues 110–158; sequence ERQKEGSLARASRASPSNARKQISRSTHSTLSKTNSKALVVGKDHESKS. A compositionally biased stretch (low complexity) spans 117–129; that stretch reads LARASRASPSNAR. Lysine 130 is modified (N6,N6,N6-trimethyllysine; by EHMT2; alternate). Lysine 130 carries the N6,N6-dimethyllysine; by EHMT2; alternate modification. The residue at position 130 (lysine 130) is an N6-methyllysine; by EHMT2; alternate. The segment covering 133–146 has biased composition (polar residues); the sequence is SRSTHSTLSKTNSK. A phosphoserine mark is found at serine 165, serine 196, and serine 211. The tract at residues 200-223 is disordered; it reads GRTSVDGFQGESPEKLDPVDQGAE. Residues 357 to 589 are acetyl-CoA-binding domain; it reads SENNSLNPEV…DSMLKYLQRK (233 aa).

Forms multimers and multimerization is required for stable binding to chromatin. Interacts with HDAC1 and HDAC2 via its C-terminal acetyl-CoA-binding domain. Interacts with EZH2, EED, SUZ12, REST, EHMT1 and EHMT2. Part of a complex containing at least CDYL, REST, WIZ, SETB1, EHMT1 and EHMT2. Part of a complex containing at least CDYL, MIER1, MIER2, HDAC1 and HDAC2. Interacts with CHAF1A and CHAF1B; bridging the CAF-1 complex to the MCM2-7 (MCM) complex. Interacts with MCM3 and MCM5; bridging the CAF-1 complex to the MCM2-7 (MCM) complex. Interacts with EHMT2 and PRDM9; interaction only takes place when PRDM9 is bound to hotspot DNA. Highly expressed in testis (at protein level). Expressed in the hippocampus (at protein level). Expressed in the medial prefrontal cortex, prelimbic cortex, intralimbic cortex and cingulate cortex area (at protein level). Isoform 1: Expressed as 2 transcripts encoding the same protein, a ubiquitous transcript and a highly expressed testis-specific transcript.

The protein resides in the nucleus. It localises to the chromosome. The catalysed reaction is L-lysyl-[protein] + acetyl-CoA = N(6)-acetyl-L-lysyl-[protein] + CoA + H(+). It catalyses the reaction 3-hydroxybutanoyl-CoA = (2E)-butenoyl-CoA + H2O. Chromatin reader protein that recognizes and binds histone H3 trimethylated at 'Lys-9', dimethylated at 'Lys-27' and trimethylated at 'Lys-27' (H3K9me3, H3K27me2 and H3K27me3, respectively). Part of multimeric repressive chromatin complexes, where it is required for transmission and restoration of repressive histone marks, thereby preserving the epigenetic landscape. Required for chromatin targeting and maximal enzymatic activity of Polycomb repressive complex 2 (PRC2); acts as a positive regulator of PRC2 activity by bridging the pre-existing histone H3K27me3 and newly recruited PRC2 on neighboring nucleosomes. Acts as a corepressor for REST by facilitating histone-lysine N-methyltransferase EHMT2 recruitment and H3K9 dimethylation at REST target genes for repression. Involved in X chromosome inactivation in females: recruited to Xist RNA-coated X chromosome and facilitates propagation of H3K9me2 by anchoring EHMT2. Promotes EZH2 accumulation and H3K27me3 methylation at DNA double strand breaks (DSBs), thereby facilitating transcriptional repression at sites of DNA damage and homology-directed repair of DSBs. Required for neuronal migration during brain development by repressing expression of RHOA. By repressing the expression of SCN8A, contributes to the inhibition of intrinsic neuronal excitability and epileptogenesis. In addition to acting as a chromatin reader, acts as a hydro-lyase. Shows crotonyl-coA hydratase activity by mediating the conversion of crotonyl-CoA ((2E)-butenoyl-CoA) to beta-hydroxybutyryl-CoA (3-hydroxybutanoyl-CoA), thereby acting as a negative regulator of histone crotonylation. Histone crotonylation is required during spermatogenesis; down-regulation of histone crotonylation by CDYL regulates the reactivation of sex chromosome-linked genes in round spermatids and histone replacement in elongating spermatids. By regulating histone crotonylation and trimethylation of H3K27, may be involved in stress-induced depression-like behaviors, possibly by regulating VGF expression. May have histone acetyltransferase activity; such activity is however unsure in vivo. Functionally, not able to recognize and bind histone H3K9me3, histone H3K27me2 and histone H3K27me3, due to the presence of a N-terminal extension that inactivates the chromo domain. This chain is Chromodomain Y-like protein, found in Mus musculus (Mouse).